Consider the following 436-residue polypeptide: Adenylosuccinate synthetase (436 aa).

GTP contacts are provided by residues 12-18 and 40-42; these read GDEGKGK and GHT. Asp13 acts as the Proton acceptor in catalysis. Residues Asp13 and Gly40 each coordinate Mg(2+). IMP-binding positions include 13 to 16, 38 to 41, Thr128, Arg142, Gln223, Thr238, and Arg302; these read DEGK and NAGH. Catalysis depends on His41, which acts as the Proton donor. 298–304 lines the substrate pocket; sequence TTTGRRR. Residues Arg304, 330–332, and 412–414 contribute to the GTP site; these read KLD and SLG.

This sequence belongs to the adenylosuccinate synthetase family. As to quaternary structure, homodimer. It depends on Mg(2+) as a cofactor.

Its subcellular location is the cytoplasm. The enzyme catalyses IMP + L-aspartate + GTP = N(6)-(1,2-dicarboxyethyl)-AMP + GDP + phosphate + 2 H(+). The protein operates within purine metabolism; AMP biosynthesis via de novo pathway; AMP from IMP: step 1/2. Functionally, plays an important role in the de novo pathway of purine nucleotide biosynthesis. Catalyzes the first committed step in the biosynthesis of AMP from IMP. The protein is Adenylosuccinate synthetase of Prochlorococcus marinus (strain MIT 9515).